A 657-amino-acid polypeptide reads, in one-letter code: 1-deoxy-D-xylulose-5-phosphate synthase (657 aa).

A thiamine diphosphate-binding site is contributed by H73. Positions 91-110 (RQEGGMSGYPDRGESEHDIV) are disordered. Residues 101-110 (DRGESEHDIV) are compositionally biased toward basic and acidic residues. Residue 113–115 (SHA) coordinates thiamine diphosphate. D145 contributes to the Mg(2+) binding site. Thiamine diphosphate contacts are provided by residues 146-147 (GA), N175, Y293, and E375. N175 is a binding site for Mg(2+).

Belongs to the transketolase family. DXPS subfamily. In terms of assembly, homodimer. Mg(2+) serves as cofactor. Requires thiamine diphosphate as cofactor.

The enzyme catalyses D-glyceraldehyde 3-phosphate + pyruvate + H(+) = 1-deoxy-D-xylulose 5-phosphate + CO2. Its pathway is metabolic intermediate biosynthesis; 1-deoxy-D-xylulose 5-phosphate biosynthesis; 1-deoxy-D-xylulose 5-phosphate from D-glyceraldehyde 3-phosphate and pyruvate: step 1/1. In terms of biological role, catalyzes the acyloin condensation reaction between C atoms 2 and 3 of pyruvate and glyceraldehyde 3-phosphate to yield 1-deoxy-D-xylulose-5-phosphate (DXP). This is 1-deoxy-D-xylulose-5-phosphate synthase from Arthrobacter sp. (strain FB24).